We begin with the raw amino-acid sequence, 147 residues long: Protein PBDC1 homolog (147 aa).

The protein belongs to the PBDC1 family.

The protein resides in the cytoplasm. Its subcellular location is the nucleus. In Schizosaccharomyces pombe (strain 972 / ATCC 24843) (Fission yeast), this protein is Protein PBDC1 homolog.